The following is a 364-amino-acid chain: Aminomethyltransferase (364 aa).

It belongs to the GcvT family. The glycine cleavage system is composed of four proteins: P, T, L and H.

It catalyses the reaction N(6)-[(R)-S(8)-aminomethyldihydrolipoyl]-L-lysyl-[protein] + (6S)-5,6,7,8-tetrahydrofolate = N(6)-[(R)-dihydrolipoyl]-L-lysyl-[protein] + (6R)-5,10-methylene-5,6,7,8-tetrahydrofolate + NH4(+). The glycine cleavage system catalyzes the degradation of glycine. The polypeptide is Aminomethyltransferase (Escherichia coli (strain 55989 / EAEC)).